A 236-amino-acid chain; its full sequence is Small ribosomal subunit protein uS2c (236 aa).

Belongs to the universal ribosomal protein uS2 family.

It is found in the plastid. The protein localises to the chloroplast. In Physcomitrium patens (Spreading-leaved earth moss), this protein is Small ribosomal subunit protein uS2c (rps2).